Reading from the N-terminus, the 776-residue chain is MNAESRIHALRAELDQHNYRYYVLDEPSVPDAEYDRLFNELKALEAEHPHLVTPDSPTQRVGGAALAAFSQVRHEVPMLSLGNAFEEADLREFGRRVVDGLDQPGAVDYSCEPKLDGLAVSLLYRDGQLVQGATRGDGTTGEDISANVRTVRNIPLKLQGKGWPAVLEVRGEVFMSKAGFDRLNAAQAEAGGKTFANPRNAAAGSLRQLDSKITASRPLEFCCYGVGQVSASIGESHIGILEQLKAWGLPISRELRHAAGIEECLAYYRDIGERRNSLPYEIDGVVFKVNSLASQRELGFRAREPRWAIAHKFPAMEELTEVLDVEFQVGRTGAVTPVARLKPVKVAGVTVSNATLHNMDEIARLGLRIGDTVIIRRAGDVIPQVMQVVLERRPEDARPVQVPSACPVCGSQVERTQLVKRSKGKETTSEGAVYRCVGRLACGAQLKQAIIHYVSRRAMDIDGLGEKSVEQLVDEGLIGSPADLYKLQFDQIVGLEGFAEVSSKKLLDAIEASKRPSLARFIYALGIPDVGEETAKVLARSLGSLARVQQALPQVLTYLPDIGLEVAYEIHNFFEDEHNCKVIEQLLGCGMQLQDEGELAAEFAASTTLAGMIAKLDIASVGPTGAEKLVAKLDSLDKIIAADGIDLRQALAAKQAEAVREFFKDEANQKLARDIEAQLLAFGMHWNSEKKVAEGLPLAGQTWVLTGTLERMSRDIAKEKLESLGAKVAGSVSGKTHCVVAGPGAGSKLAKASELGVKVLDEDAFVVFLDEQGIAI.

NAD(+) contacts are provided by residues 31–35 (DAEYD), 80–81 (SL), and Glu-112. Lys-114 (N6-AMP-lysine intermediate) is an active-site residue. Positions 135, 172, 288, and 312 each coordinate NAD(+). Residues Cys-406, Cys-409, Cys-436, and Cys-442 each contribute to the Zn(2+) site. One can recognise a BRCT domain in the interval 693–776 (AEGLPLAGQT…VFLDEQGIAI (84 aa)).

It belongs to the NAD-dependent DNA ligase family. LigA subfamily. It depends on Mg(2+) as a cofactor. The cofactor is Mn(2+).

The catalysed reaction is NAD(+) + (deoxyribonucleotide)n-3'-hydroxyl + 5'-phospho-(deoxyribonucleotide)m = (deoxyribonucleotide)n+m + AMP + beta-nicotinamide D-nucleotide.. Its function is as follows. DNA ligase that catalyzes the formation of phosphodiester linkages between 5'-phosphoryl and 3'-hydroxyl groups in double-stranded DNA using NAD as a coenzyme and as the energy source for the reaction. It is essential for DNA replication and repair of damaged DNA. This Pseudomonas putida (strain W619) protein is DNA ligase.